Reading from the N-terminus, the 166-residue chain is Interferon gamma (166 aa).

A signal peptide spans 1-23; that stretch reads MKYTSSFLALLLSVLLGFSGSYG. A Pyrrolidone carboxylic acid modification is found at Gln-24. Asn-39 and Asn-106 each carry an N-linked (GlcNAc...) asparagine glycan.

It belongs to the type II (or gamma) interferon family. Homodimer. Interacts with IFNGR1 (via extracellular domain); this interaction promotes IFNGR1 dimerization. In terms of tissue distribution, released primarily from activated T lymphocytes.

The protein localises to the secreted. In terms of biological role, type II interferon produced by immune cells such as T-cells and NK cells that plays crucial roles in antimicrobial, antiviral, and antitumor responses by activating effector immune cells and enhancing antigen presentation. Primarily signals through the JAK-STAT pathway after interaction with its receptor IFNGR1 to affect gene regulation. Upon IFNG binding, IFNGR1 intracellular domain opens out to allow association of downstream signaling components JAK2, JAK1 and STAT1, leading to STAT1 activation, nuclear translocation and transcription of IFNG-regulated genes. Many of the induced genes are transcription factors such as IRF1 that are able to further drive regulation of a next wave of transcription. Plays a role in class I antigen presentation pathway by inducing a replacement of catalytic proteasome subunits with immunoproteasome subunits. In turn, increases the quantity, quality, and repertoire of peptides for class I MHC loading. Increases the efficiency of peptide generation also by inducing the expression of activator PA28 that associates with the proteasome and alters its proteolytic cleavage preference. Up-regulates as well MHC II complexes on the cell surface by promoting expression of several key molecules such as cathepsins B/CTSB, H/CTSH, and L/CTSL. Participates in the regulation of hematopoietic stem cells during development and under homeostatic conditions by affecting their development, quiescence, and differentiation. The polypeptide is Interferon gamma (IFNG) (Capra hircus (Goat)).